The chain runs to 1338 residues: Thioester-containing protein 1 allele R1 (1338 aa).

The signal sequence occupies residues 1–21 (MWQFIRSRILTVIIFIGAAHG). N-linked (GlcNAc...) asparagine glycosylation is found at Asn-68, Asn-199, Asn-242, Asn-312, and Asn-481. The may contain the cleavage site stretch occupies residues 580–609 (ENEFDIFHSLGLFARTLDDILFDSANEKTG). Asn-637, Asn-728, and Asn-813 each carry an N-linked (GlcNAc...) asparagine glycan. Residues 859–862 (CGEQ) constitute a cross-link (isoglutamyl cysteine thioester (Cys-Gln)). Asn-919 and Asn-1065 each carry an N-linked (GlcNAc...) asparagine glycan. 3 disulfide bridges follow: Cys-1217-Cys-1283, Cys-1326-Cys-1338, and Cys-1329-Cys-1334.

In terms of assembly, heterodimer of a TEP1-N chain and an TEP1-C chain non-covalently linked. Forms a complex composed of TEP1-N and TEP1-C heterodimer, LRIM1 and APL1C; the interaction stabilizes TEP1-N and TEP1-C heterodimer, prevents its binding to tissues while circulating in the hemolymph and protects the thioester bond from hydrolysis. Mature TEP1 and to a lesser extent full-length TEP1 interact with SPCLIP1; the interaction is induced by microbial infection. Post-translationally, in the hemolymph, the full-length protein is cleaved by an unknow protease into a 75kDa N-terminal (TEP1-N) chain and an 80kDa C-terminal (TEP1-C) chain which remain non-covalently linked. The TEP1-C chain contains the thioester bond which covalently binds to the pathogen surface. Cleavage is induced by bacterial infection or aseptic wound injury. During embryonic and pupal development, the cleaved form is the predominant form. N-glycosylated.

It localises to the secreted. Plays an essential role in the innate immune response against bacteria, fungi and protozoa infection. After proteolytic cleavage, the protein C-terminus binds covalently through a thioester bond to the pathogen surface resulting in pathogen clearance either by melanization or lysis. Initiate the recruitment and activation of a cascade of proteases, mostly of CLIP-domain serine proteases, which leads to the proteolytic cleavage of the prophenoloxidase (PPO) into active phenoloxidase (PO), the rate-limiting enzyme in melanin biosynthesis. In response to parasite P.berghei-mediated infection, binds to and mediates killing of ookinetes, as they egress from midgut epithelial cells into the basal labyrinth, by both lysis and melanization. During bacterial infection, binds to both Gram-positive and Gram-negative bacteria but only promotes phagocytosis of Gram-negative bacteria. Promotes the accumulation of SPCLIP1 onto the surface of P.berghei ookinetes and bacterium E.coli which leads to the melanization of the pathogen. Recruits CLIPA2 to bacteria surface. In response to bacterial infection, required for periostial hemocyte aggregation, but not for the aggregation of sessile hemocytes in non-periostial regions. During the late stage of fungus B.bassiana-mediated infection, required for the initiation of hyphae melanization by binding to the surface of hyphae and recruiting prophenoloxidase PPO to them. Plays a role in male fertility by binding to defective sperm cells and promoting their removal during spermatogenesis. Functionally, binds to and mediates killing of parasite P.bergei ookinetes by lysis and melanization. Its function is as follows. Binds covalently through a thioester bond to the pathogen surface resulting in pathogen clearance. This is Thioester-containing protein 1 allele R1 from Anopheles gambiae (African malaria mosquito).